Reading from the N-terminus, the 313-residue chain is 2,3-dihydroxyphenylpropionate/2,3-dihydroxicinnamic acid 1,2-dioxygenase (313 aa).

Residue His115 is the Proton donor of the active site. The Proton acceptor role is filled by His179.

The protein belongs to the LigB/MhpB extradiol dioxygenase family. As to quaternary structure, homotetramer. Fe(2+) is required as a cofactor.

The catalysed reaction is 3-(2,3-dihydroxyphenyl)propanoate + O2 = (2Z,4E)-2-hydroxy-6-oxonona-2,4-dienedioate + H(+). It catalyses the reaction (2E)-3-(2,3-dihydroxyphenyl)prop-2-enoate + O2 = (2Z,4E,7E)-2-hydroxy-6-oxonona-2,4,7-trienedioate + H(+). Its pathway is aromatic compound metabolism; 3-phenylpropanoate degradation. Functionally, catalyzes the non-heme iron(II)-dependent oxidative cleavage of 2,3-dihydroxyphenylpropionic acid and 2,3-dihydroxicinnamic acid into 2-hydroxy-6-ketononadienedioate and 2-hydroxy-6-ketononatrienedioate, respectively. The chain is 2,3-dihydroxyphenylpropionate/2,3-dihydroxicinnamic acid 1,2-dioxygenase from Mycobacterium ulcerans (strain Agy99).